The following is a 337-amino-acid chain: uncharacterized protein (337 aa).

A run of 2 helical transmembrane segments spans residues 4 to 24 and 26 to 46; these read FIFF…FSLI and LLLW…LFAL.

This sequence belongs to the plectrovirus ORF2 family.

It is found in the host membrane. This is an uncharacterized protein from Spiroplasma melliferum (SpV1).